Reading from the N-terminus, the 1382-residue chain is Hepatocyte growth factor receptor (1382 aa).

A signal peptide spans 1–24 (MKAPAVLAPGILVLLFTLVQKSYG). Residues 25–933 (ECREALVKSE…VIVQPDQNFT (909 aa)) lie on the Extracellular side of the membrane. Residues 27-516 (REALVKSEMN…TGKKITKIPL (490 aa)) enclose the Sema domain. N-linked (GlcNAc...) asparagine glycosylation is present at Asn-45. Disulfide bonds link Cys-95–Cys-101, Cys-98–Cys-160, Cys-133–Cys-141, and Cys-173–Cys-176. Asn-106 carries an N-linked (GlcNAc...) asparagine glycan. 2 N-linked (GlcNAc...) asparagine glycosylation sites follow: Asn-203 and Asn-359. 2 disulfides stabilise this stretch: Cys-299–Cys-364 and Cys-386–Cys-398. Residues Asn-400 and Asn-406 are each glycosylated (N-linked (GlcNAc...) asparagine). Cystine bridges form between Cys-521-Cys-539, Cys-527-Cys-562, Cys-530-Cys-546, and Cys-542-Cys-552. IPT/TIG domains lie at 564 to 656 (PTIY…FSYV), 658 to 740 (PVIT…FSYQ), and 743 to 837 (PIVY…LIYV). Residue Thr-583 is glycosylated (O-linked (Man) threonine). N-linked (GlcNAc...) asparagine glycosylation is found at Asn-608 and Asn-636. Thr-677 and Thr-762 each carry an O-linked (Man) threonine glycan. Residues Asn-786, Asn-880, and Asn-931 are each glycosylated (N-linked (GlcNAc...) asparagine). A helical transmembrane segment spans residues 934 to 956 (GLIVGVISISIILLLLLGVFLWL). The Cytoplasmic portion of the chain corresponds to 957–1382 (KKRKQIKDLG…QDNIDGEGDT (426 aa)). Ser-967 carries the post-translational modification Phosphoserine. Thr-978 carries the post-translational modification Phosphothreonine. 3 positions are modified to phosphoserine: Ser-991, Ser-998, and Ser-1001. Tyr-1004 carries the post-translational modification Phosphotyrosine. A Protein kinase domain is found at 1079 to 1346 (VHFNEVIGRG…RISAIFSTFI (268 aa)). ATP-binding positions include 1085–1093 (IGRGHFGCV) and Lys-1111. Asp-1205 acts as the Proton acceptor in catalysis. Positions 1213–1382 (LDEKFTVKVA…QDNIDGEGDT (170 aa)) are interaction with RANBP9. Residue Tyr-1231 is modified to Phosphotyrosine. Residues Tyr-1235 and Tyr-1236 each carry the phosphotyrosine; by autocatalysis modification. Thr-1290 carries the post-translational modification Phosphothreonine. An interaction with MUC20 region spans residues 1321–1360 (WHPKAELRPSFSELVSRISAIFSTFIGEHYVHVNATYVNV). Phosphotyrosine; by autocatalysis occurs at positions 1350 and 1357. Tyr-1366 bears the Phosphotyrosine mark.

Belongs to the protein kinase superfamily. Tyr protein kinase family. In terms of assembly, heterodimer made of an alpha chain (50 kDa) and a beta chain (145 kDa) which are disulfide linked. Binds PLXNB1. Interacts when phosphorylated with downstream effectors including STAT3, PIK3R1, SRC, PCLG1, GRB2 and GAB1. Interacts with SPSB1, SPSB2 and SPSB4. Interacts with INPP5D/SHIP1. When phosphorylated at Tyr-1357, interacts with INPPL1/SHIP2. Interacts with RANBP9 and RANBP10, as well as SPSB1, SPSB2, SPSB3 and SPSB4. SPSB1 binding occurs in the presence and in the absence of HGF, however HGF treatment has a positive effect on this interaction. Interacts with MUC20; prevents interaction with GRB2 and suppresses hepatocyte growth factor-induced cell proliferation. Interacts with GRB10. Interacts with PTPN1 and PTPN2. Interacts with HSP90AA1 and HSP90AB1; the interaction suppresses MET kinase activity. Interacts with tensin TNS3. Interacts (when phosphorylated) with tensin TNS4 (via SH2 domain); the interaction increases MET protein stability by inhibiting MET endocytosis and subsequent lysosomal degradation. Post-translationally, autophosphorylated in response to ligand binding on Tyr-1235 and Tyr-1236 in the kinase domain leading to further phosphorylation of Tyr-1350 and Tyr-1357 in the C-terminal multifunctional docking site. Dephosphorylated by PTPRJ at Tyr-1350 and Tyr-1366. Dephosphorylated by PTPN1 and PTPN2. In terms of processing, ubiquitinated. Ubiquitination by CBL regulates the receptor stability and activity through proteasomal degradation. O-mannosylation of IPT/TIG domains by TMEM260 is required for protein maturation. O-mannosylated residues are composed of single mannose glycans that are not elongated or modified.

It localises to the membrane. The catalysed reaction is L-tyrosyl-[protein] + ATP = O-phospho-L-tyrosyl-[protein] + ADP + H(+). With respect to regulation, in its inactive state, the C-terminal tail interacts with the catalytic domain and inhibits the kinase activity. Upon ligand binding, the C-terminal tail is displaced and becomes phosphorylated, thus increasing the kinase activity. Its function is as follows. Receptor tyrosine kinase that transduces signals from the extracellular matrix into the cytoplasm by binding to hepatocyte growth factor/HGF ligand. Regulates many physiological processes including proliferation, scattering, morphogenesis and survival. Ligand binding at the cell surface induces autophosphorylation of MET on its intracellular domain that provides docking sites for downstream signaling molecules. Following activation by ligand, interacts with the PI3-kinase subunit PIK3R1, PLCG1, SRC, GRB2, STAT3 or the adapter GAB1. Recruitment of these downstream effectors by MET leads to the activation of several signaling cascades including the RAS-ERK, PI3 kinase-AKT, or PLCgamma-PKC. The RAS-ERK activation is associated with the morphogenetic effects while PI3K/AKT coordinates prosurvival effects. During embryonic development, MET signaling plays a role in gastrulation, development and migration of muscles and neuronal precursors, angiogenesis and kidney formation. In adults, participates in wound healing as well as organ regeneration and tissue remodeling. Also promotes differentiation and proliferation of hematopoietic cells. This is Hepatocyte growth factor receptor (MET) from Felis catus (Cat).